The chain runs to 495 residues: Chromosomal replication initiator protein DnaA (495 aa).

Residues 1–91 (MTADPDPPFV…ITALSRHLGQ (91 aa)) form a domain I, interacts with DnaA modulators region. Residues 91 to 154 (QRVELGVRIA…TPAAEDPNAV (64 aa)) form a domain II region. The segment at 155–371 (SLNRRYTFDT…GALIRVTAFA (217 aa)) is domain III, AAA+ region. Positions 199, 201, 202, and 203 each coordinate ATP. Residues 372 to 495 (SLNKTPIDKS…TTRIRQRAKR (124 aa)) are domain IV, binds dsDNA.

The protein belongs to the DnaA family. As to quaternary structure, oligomerizes as a right-handed, spiral filament on DNA at oriC.

The protein resides in the cytoplasm. Its function is as follows. Plays an essential role in the initiation and regulation of chromosomal replication. ATP-DnaA binds to the origin of replication (oriC) to initiate formation of the DNA replication initiation complex once per cell cycle. Binds the DnaA box (a 9 base pair repeat at the origin) and separates the double-stranded (ds)DNA. Forms a right-handed helical filament on oriC DNA; dsDNA binds to the exterior of the filament while single-stranded (ss)DNA is stabiized in the filament's interior. The ATP-DnaA-oriC complex binds and stabilizes one strand of the AT-rich DNA unwinding element (DUE), permitting loading of DNA polymerase. After initiation quickly degrades to an ADP-DnaA complex that is not apt for DNA replication. Binds acidic phospholipids. This Mycobacterium sp. (strain JLS) protein is Chromosomal replication initiator protein DnaA.